The chain runs to 343 residues: Protein RecA (343 aa).

66-73 (GPESSGKT) lines the ATP pocket.

It belongs to the RecA family.

It is found in the cytoplasm. In terms of biological role, can catalyze the hydrolysis of ATP in the presence of single-stranded DNA, the ATP-dependent uptake of single-stranded DNA by duplex DNA, and the ATP-dependent hybridization of homologous single-stranded DNAs. It interacts with LexA causing its activation and leading to its autocatalytic cleavage. The polypeptide is Protein RecA (Rickettsia bellii (strain RML369-C)).